A 102-amino-acid chain; its full sequence is MTTASSKVAIKPLEDRIVVQPLDAEQTTASGLVIPDTAKEKPQEGVVLAVGPGRFENGERLPLDVKTGDVVLYSKYGGTEVKYNGEEYLVLSARDVLAIIEK.

Belongs to the GroES chaperonin family. In terms of assembly, heptamer of 7 subunits arranged in a ring. Interacts with the chaperonin GroEL.

It is found in the cytoplasm. Its function is as follows. Together with the chaperonin GroEL, plays an essential role in assisting protein folding. The GroEL-GroES system forms a nano-cage that allows encapsulation of the non-native substrate proteins and provides a physical environment optimized to promote and accelerate protein folding. GroES binds to the apical surface of the GroEL ring, thereby capping the opening of the GroEL channel. The sequence is that of Co-chaperonin GroES from Streptomyces albus G.